The following is a 472-amino-acid chain: ATP synthase subunit beta (472 aa).

150–157 (GGAGVGKT) contributes to the ATP binding site.

Belongs to the ATPase alpha/beta chains family. F-type ATPases have 2 components, CF(1) - the catalytic core - and CF(0) - the membrane proton channel. CF(1) has five subunits: alpha(3), beta(3), gamma(1), delta(1), epsilon(1). CF(0) has four main subunits: a, b, b' and c.

It localises to the cellular chromatophore membrane. It carries out the reaction ATP + H2O + 4 H(+)(in) = ADP + phosphate + 5 H(+)(out). In terms of biological role, produces ATP from ADP in the presence of a proton gradient across the membrane. The catalytic sites are hosted primarily by the beta subunits. In Rhodobacter capsulatus (Rhodopseudomonas capsulata), this protein is ATP synthase subunit beta.